The sequence spans 359 residues: NAC domain-containing protein 45 (359 aa).

Positions 19-185 (LPPGFRFHPT…EWVVCKVFHK (167 aa)) constitute an NAC domain. Residues 130 to 191 (VGMKKTLVFY…VFHKKGDDRE (62 aa)) mediate DNA binding.

As to expression, expressed in roots. Expressed at low levels in leaves, stems and panicles.

It localises to the nucleus. Its function is as follows. Transcription activator involved in responses to drought stress and salt stress. Transactivates the stress response genes LEA19 and PM19L. The polypeptide is NAC domain-containing protein 45 (Oryza sativa subsp. japonica (Rice)).